A 1036-amino-acid chain; its full sequence is Serine/threonine-protein kinase ULK2 (1036 aa).

In terms of domain architecture, Protein kinase spans 9-271 (YSKRDLVGHG…FEAFFSHPFL (263 aa)). Residues 15 to 23 (VGHGAFAVV) and K39 each bind ATP. The Proton acceptor role is filled by D131. Disordered stretches follow at residues 319–348 (ENLS…NSSC), 418–460 (TSTA…ADTA), 491–522 (CCCG…SLLS), 540–588 (QKLR…SSDW), and 656–695 (AEQQ…LNTE). The span at 335–348 (SKDSASTSSKNSSC) shows a compositional bias: low complexity. A compositionally biased stretch (polar residues) spans 418–428 (TSTASSGTNVH). S430 is modified (phosphoserine). Positions 504–521 (RNSSGSPVPQAQSPQSLL) are enriched in polar residues. The segment covering 659-679 (QSKAVFGRSVSTGKLSDQQGK) has biased composition (polar residues). Phosphoserine occurs at positions 771 and 780. The segment at 812–1036 (ELPEETLMER…SALCHSTATV (225 aa)) is CTD-like region.

This sequence belongs to the protein kinase superfamily. Ser/Thr protein kinase family. APG1/unc-51/ULK1 subfamily. In terms of assembly, interacts with SYNGAP1. Component of a complex consisting of ATG13/KIAA0652, ULK1 and RB1CC1/FIP200. Interacts (via C-terminus) with ATG13/KIAA0652. Associates with the mammalian target of rapamycin complex 1 (mTORC1) through an interaction with RPTOR. Post-translationally, autophosphorylated. In response to nutrient limitation, probably phosphorylated and activated by AMPK, leading to activate autophagy.

The protein localises to the cytoplasmic vesicle membrane. It carries out the reaction L-seryl-[protein] + ATP = O-phospho-L-seryl-[protein] + ADP + H(+). The catalysed reaction is L-threonyl-[protein] + ATP = O-phospho-L-threonyl-[protein] + ADP + H(+). Its function is as follows. Serine/threonine-protein kinase involved in autophagy in response to starvation. Acts upstream of phosphatidylinositol 3-kinase PIK3C3 to regulate the formation of autophagophores, the precursors of autophagosomes. Part of regulatory feedback loops in autophagy: acts both as a downstream effector and a negative regulator of mammalian target of rapamycin complex 1 (mTORC1) via interaction with RPTOR. Activated via phosphorylation by AMPK, also acts as a negative regulator of AMPK through phosphorylation of the AMPK subunits PRKAA1, PRKAB2 and PRKAG1. May phosphorylate ATG13/KIAA0652, FRS2, FRS3 and RPTOR; however such data need additional evidences. Not involved in ammonia-induced autophagy or in autophagic response of cerebellar granule neurons (CGN) to low potassium concentration. Plays a role early in neuronal differentiation and is required for granule cell axon formation: may govern axon formation via Ras-like GTPase signaling and through regulation of the Rab5-mediated endocytic pathways within developing axons. This Homo sapiens (Human) protein is Serine/threonine-protein kinase ULK2 (ULK2).